We begin with the raw amino-acid sequence, 246 residues long: Peroxisomal membrane protein 11A (246 aa).

Over 1 to 93 (MDAFIRVANQ…LCLTLANLNR (93 aa)) the chain is Cytoplasmic. The chain crosses the membrane as a helical span at residues 94–114 (VVYYICDTVLWAKSVGLTSGI). The Lumenal portion of the chain corresponds to 115–217 (NREKWQMRAA…LNQLGIYKSN (103 aa)). Residues 218-238 (LGVVGFGGLVSSVAGLITVVY) traverse the membrane as a helical segment. A required for homodimerization, interaction with PEX11G, and peroxisomal localization region spans residues 218–238 (LGVVGFGGLVSSVAGLITVVY). The Cytoplasmic segment spans residues 239 to 246 (PQLKLKAR).

This sequence belongs to the peroxin-11 family. Homodimer. Heterodimer with PEX11G. Probably interacts with COPB2 and COPA. Interacts with PEX19. Interacts with FIS1. In terms of tissue distribution, expressed at high levels in kidney, liver, lung, brain, and testis and at low levels in heart, spleen and skeletal muscle.

The protein localises to the peroxisome membrane. Its function is as follows. May be involved in peroxisomal proliferation and may regulate peroxisomes division. May mediate binding of coatomer proteins to the peroxisomal membrane. Promotes membrane protrusion and elongation on the peroxisomal surface. In Rattus norvegicus (Rat), this protein is Peroxisomal membrane protein 11A (Pex11a).